A 489-amino-acid chain; its full sequence is Probable capsid protein (489 aa).

Residues 87–101 (RMERGESSETKREQQ) are compositionally biased toward basic and acidic residues. A disordered region spans residues 87–111 (RMERGESSETKREQQDLGATRKRKI). Positions 107–110 (RKRK) match the Nuclear localization signal motif. The CCHC-type zinc-finger motif lies at 409 to 426 (CRCWICTEEGHYANECPN). Residues 466-489 (ETTSEEESTTDSDSSSSDDEQLSF) form a disordered region.

It belongs to the caulimoviridae capsid protein family. In terms of assembly, interacts (via nuclear localization signal) with host importin alpha.

It localises to the virion. The protein resides in the host nucleus. Self assembles to form an icosahedral capsid, about 50 nm in diameter, nm, composed of 420 subunits of the viral capsid protein. The capsid encapsulates the genomic dsDNA. Following virus entry into host cell, provides nuclear import of the viral genome. Virus particles do not enter the nucleus, but dock at the nuclear membrane through the interaction with host importins. This Scrophularia californica (California bee plant) protein is Probable capsid protein.